A 212-amino-acid chain; its full sequence is 2-dehydro-3-deoxy-phosphogluconate aldolase (212 aa).

Glu45 serves as the catalytic Proton acceptor. Pyruvate contacts are provided by Arg49, Thr73, and Lys133. The active-site Schiff-base intermediate with substrate is the Lys133.

It belongs to the KHG/KDPG aldolase family. Homotrimer.

Its subcellular location is the cytoplasm. It catalyses the reaction 2-dehydro-3-deoxy-6-phospho-D-gluconate = D-glyceraldehyde 3-phosphate + pyruvate. It functions in the pathway carbohydrate acid metabolism; 2-dehydro-3-deoxy-D-gluconate degradation; D-glyceraldehyde 3-phosphate and pyruvate from 2-dehydro-3-deoxy-D-gluconate: step 2/2. Its function is as follows. Involved in the degradation of glucose via the Entner-Doudoroff pathway. Catalyzes the reversible, stereospecific retro-aldol cleavage of 2-keto-3-deoxy-6-phosphogluconate (KDPG) to pyruvate and D-glyceraldehyde-3-phosphate. The chain is 2-dehydro-3-deoxy-phosphogluconate aldolase (eda) from Haemophilus influenzae (strain ATCC 51907 / DSM 11121 / KW20 / Rd).